A 687-amino-acid polypeptide reads, in one-letter code: Dictomallein (687 aa).

2 disordered regions span residues 1–45 (MGNG…SRRL) and 73–112 (TAGG…STSA). The region spanning 233-501 (PVFGTDADVQ…QAWIASRVLA (269 aa)) is the Peptidase M66 domain. His393 is a Zn(2+) binding site. The active site involves Glu394. 2 residues coordinate Zn(2+): His397 and His403.

It belongs to the dictomallein family. Zn(2+) serves as cofactor.

The polypeptide is Dictomallein (dtmL) (Burkholderia pseudomallei (strain 1710b)).